The following is a 257-amino-acid chain: Glutamate racemase (257 aa).

Residues 12–13 and 44–45 each bind substrate; these read DS and YG. Residue Cys75 is the Proton donor/acceptor of the active site. 76 to 77 provides a ligand contact to substrate; the sequence is NT. The active-site Proton donor/acceptor is Cys186. 187 to 188 serves as a coordination point for substrate; sequence TH.

It belongs to the aspartate/glutamate racemases family.

It catalyses the reaction L-glutamate = D-glutamate. It participates in cell wall biogenesis; peptidoglycan biosynthesis. Functionally, provides the (R)-glutamate required for cell wall biosynthesis. This Clostridium kluyveri (strain NBRC 12016) protein is Glutamate racemase.